We begin with the raw amino-acid sequence, 578 residues long: Probable ATP-dependent RNA helicase DDX55 homolog (578 aa).

The Q motif signature appears at 7–37 (PVALKTFREKLGPELLEVFDKSYKSFTDVQV). The Helicase ATP-binding domain occupies 40–218 (GTHLLNLSDV…VFGLRNAKQV (179 aa)). ATP is bound at residue 53 to 60 (SPTGSGKT). The short motif at 166–169 (DEAD) is the DEAD box element. The Helicase C-terminal domain occupies 231-393 (TLKNYYVECR…EIKVPTNNSR (163 aa)). The interval 507–557 (AAKDKKRREKEARKLKKMGGRFRNGGGTGRKAEEKKALKRKAEEEDDAQND) is disordered. Residues 510-526 (DKKRREKEARKLKKMGG) show a composition bias toward basic residues. Basic and acidic residues predominate over residues 536 to 549 (RKAEEKKALKRKAE).

It belongs to the DEAD box helicase family. DDX55/SPB4 subfamily.

The enzyme catalyses ATP + H2O = ADP + phosphate + H(+). Probable ATP-binding RNA helicase. In Caenorhabditis elegans, this protein is Probable ATP-dependent RNA helicase DDX55 homolog.